The chain runs to 169 residues: Probable phospholipid hydroperoxide glutathione peroxidase (169 aa).

C43 is an active-site residue.

This sequence belongs to the glutathione peroxidase family.

It is found in the cytoplasm. It catalyses the reaction a hydroperoxy polyunsaturated fatty acid + 2 glutathione = a hydroxy polyunsaturated fatty acid + glutathione disulfide + H2O. Functionally, protects cells and enzymes from oxidative damage, by catalyzing the reduction of hydrogen peroxide, lipid peroxides and organic hydroperoxide, by glutathione. This chain is Probable phospholipid hydroperoxide glutathione peroxidase, found in Nicotiana tabacum (Common tobacco).